The sequence spans 434 residues: Glutamate-1-semialdehyde 2,1-aminomutase (434 aa).

K271 is modified (N6-(pyridoxal phosphate)lysine).

The protein belongs to the class-III pyridoxal-phosphate-dependent aminotransferase family. HemL subfamily. As to quaternary structure, homodimer. It depends on pyridoxal 5'-phosphate as a cofactor.

It localises to the cytoplasm. The enzyme catalyses (S)-4-amino-5-oxopentanoate = 5-aminolevulinate. It participates in porphyrin-containing compound metabolism; protoporphyrin-IX biosynthesis; 5-aminolevulinate from L-glutamyl-tRNA(Glu): step 2/2. It functions in the pathway porphyrin-containing compound metabolism; chlorophyll biosynthesis. This is Glutamate-1-semialdehyde 2,1-aminomutase from Prochlorococcus marinus (strain MIT 9312).